The following is a 2059-amino-acid chain: Non-reducing polyketide synthase stmB (2059 aa).

Residues 7–243 (LLFGDQTVEL…LKLAAYGAVH (237 aa)) form the Starter acyltransferase (SAT) domain. Residues 366–796 (SNSIAIVGMA…GGNSCLILEE (431 aa)) enclose the Ketosynthase family 3 (KS3) domain. Catalysis depends on for beta-ketoacyl synthase activity residues C538, H673, and H713. Residues 895–1185 (WVFSGQGSQY…CGSMVKATLG (291 aa)) enclose the Malonyl-CoA:ACP transacylase (MAT) domain. The interval 1273–1413 (LHFVKKETVT…SASEWTDEWS (141 aa)) is N-terminal hotdog fold. Positions 1273–1581 (LHFVKKETVT…FQRMPRMVLH (309 aa)) constitute a PKS/mFAS DH domain. Residue H1306 is the Proton acceptor; for dehydratase activity of the active site. Positions 1435-1581 (GDHLRRPVVY…FQRMPRMVLH (147 aa)) are C-terminal hotdog fold. D1495 functions as the Proton donor; for dehydratase activity in the catalytic mechanism. Residues 1619–1696 (PPKHDLADQL…DARRALGGDE (78 aa)) enclose the Carrier domain. At S1656 the chain carries O-(pantetheine 4'-phosphoryl)serine. The disordered stretch occupies residues 1693-1727 (GGDETASESENDAEGDAPSDGGSPSGSWTPISPPE). Positions 1697 to 1709 (TASESENDAEGDA) are enriched in acidic residues. Positions 1710–1719 (PSDGGSPSGS) are enriched in low complexity. Residues 1778–2059 (AVEYKSNVVL…LGKLLQEAVA (282 aa)) are thioesterase (TE) domain.

The cofactor is pantetheine 4'-phosphate.

It functions in the pathway mycotoxin biosynthesis. Non-reducing polyketide synthase; part of the gene cluster that mediates the biosynthesis of stromemycin, a depside C-glucoside with two unsaturated C9 side chains belonging to aromatic polyketide glycosides. The HR-PKS stmA and the NR-PKS stmB act as scaffold-generating enzymes responsible for the biosynthesis of the polyketide skeleton bininalkenylresorcylic acid. StmA condenses on acetyl-CoA starter unit with 4 malonyl-CoA units and the stmB uses 3 more malonyl-CoA units and catalyzes the depside bond formation. The glycoytransferase stmC then acts as the tailoring enzyme responsible for 3-C-glucosylation of bininalkenylresorcylic acid to yield stromemycin. In Aspergillus ustus, this protein is Non-reducing polyketide synthase stmB.